Reading from the N-terminus, the 243-residue chain is UPF0758 protein Tery_2667 (243 aa).

An MPN domain is found at 113–235; it reads VVESPQAAAD…HSSLRQITNL (123 aa). Positions 184, 186, and 197 each coordinate Zn(2+). The short motif at 184-197 is the JAMM motif element; that stretch reads HNHPSGNVEPSPED.

The protein belongs to the UPF0758 family.

The polypeptide is UPF0758 protein Tery_2667 (Trichodesmium erythraeum (strain IMS101)).